The primary structure comprises 156 residues: Arginine repressor (156 aa).

The protein belongs to the ArgR family.

The protein localises to the cytoplasm. It functions in the pathway amino-acid biosynthesis; L-arginine biosynthesis [regulation]. Functionally, regulates arginine biosynthesis genes. The sequence is that of Arginine repressor from Edwardsiella ictaluri (strain 93-146).